The sequence spans 315 residues: Homoserine kinase (315 aa).

ATP is bound at residue 97 to 107; it reads PPARGLGSSAT.

Belongs to the GHMP kinase family. Homoserine kinase subfamily.

The protein localises to the cytoplasm. The enzyme catalyses L-homoserine + ATP = O-phospho-L-homoserine + ADP + H(+). It participates in amino-acid biosynthesis; L-threonine biosynthesis; L-threonine from L-aspartate: step 4/5. In terms of biological role, catalyzes the ATP-dependent phosphorylation of L-homoserine to L-homoserine phosphate. This Parasynechococcus marenigrum (strain WH8102) protein is Homoserine kinase.